Consider the following 233-residue polypeptide: MDNKRQEQLQHFWEQFHLPAIDLEGLDLALTHPTYAFEHHLPGDNQRLEFLGDAVLGLVVATYLYQHFPQLPEGDLTRMRAAVVCEASLVKVARRLRVGDLLRLGQGEEHSGGRERPSNLADAMEAIIGSVYLSGGYELARDFVLQIFTPALEILSDTSFIDSKSALQEFVQSQGTENVVYKILEEWGPDHAKGYKAGVFLKNRLLATGLGHSKKEAEREAARAALALLKVQG.

The RNase III domain occupies leucine 9–glycine 136. Glutamate 49 is a Mg(2+) binding site. The active site involves aspartate 53. 2 residues coordinate Mg(2+): aspartate 122 and glutamate 125. The active site involves glutamate 125. One can recognise a DRBM domain in the interval aspartate 162 to valine 231.

The protein belongs to the ribonuclease III family. In terms of assembly, homodimer. It depends on Mg(2+) as a cofactor.

The protein localises to the cytoplasm. It catalyses the reaction Endonucleolytic cleavage to 5'-phosphomonoester.. Functionally, digests double-stranded RNA. Involved in the processing of primary rRNA transcript to yield the immediate precursors to the large and small rRNAs (23S and 16S). Processes some mRNAs, and tRNAs when they are encoded in the rRNA operon. Processes pre-crRNA and tracrRNA of type II CRISPR loci if present in the organism. This Moorella thermoacetica (strain ATCC 39073 / JCM 9320) protein is Ribonuclease 3.